A 93-amino-acid chain; its full sequence is Mitochondrial import inner membrane translocase subunit TIM10 (93 aa).

The segment at 1-31 (MSFLGFGGGQPQLSSQQKIQAAEAELDLVTD) is interaction with transmembrane regions of transmembrane proteins in transit. The Twin CX3C motif motif lies at 40–65 (CYKKCINTSYSEGELNKNESSCLDRC). 2 disulfides stabilise this stretch: Cys40/Cys65 and Cys44/Cys61. The required for heterohexamerization stretch occupies residues 73-93 (NVQVGENMQKMGQSFNAAGKF).

The protein belongs to the small Tim family. Heterohexamer; composed of 3 copies of TIM9 and 3 copies of TIM10, named soluble 70 kDa complex. Associates directly with the TIM12 component of the TIM22 complex, whose core is composed of TIM18, TIM22 and TIM54. Interacts with the transmembrane regions of multi-pass transmembrane proteins in transit.

It is found in the mitochondrion inner membrane. Its subcellular location is the mitochondrion intermembrane space. In terms of biological role, mitochondrial intermembrane chaperone that participates in the import and insertion of multi-pass transmembrane proteins into the mitochondrial inner membrane. Also required for the transfer of beta-barrel precursors from the TOM complex to the sorting and assembly machinery (SAM complex) of the outer membrane. Acts as a chaperone-like protein that protects the hydrophobic precursors from aggregation and guide them through the mitochondrial intermembrane space. Compared to TIM9, it may function as a substrate sensor. This is Mitochondrial import inner membrane translocase subunit TIM10 (TIM10) from Saccharomyces cerevisiae (strain ATCC 204508 / S288c) (Baker's yeast).